A 141-amino-acid chain; its full sequence is VLSPADKTNIKSTWDKIGGHAGDYGGEALDRTFQSFPTTKTYFPHFDLSPGSAQVKAHGKKVADALTTAVAHLDDLPGALSALSDLHAYKLRVDPVNFKLLSHCLLVTLACHHPTEFTPAVHASLDKFFTAVSTVLTSKYR.

One can recognise a Globin domain in the interval 1–141 (VLSPADKTNI…VSTVLTSKYR (141 aa)). The residue at position 3 (S3) is a Phosphoserine. The residue at position 7 (K7) is an N6-succinyllysine. T8 carries the phosphothreonine modification. Position 11 is an N6-succinyllysine (K11). Position 16 is an N6-acetyllysine; alternate (K16). The residue at position 16 (K16) is an N6-succinyllysine; alternate. Y24 is subject to Phosphotyrosine. Residue S35 is modified to Phosphoserine. At K40 the chain carries N6-succinyllysine. The residue at position 49 (S49) is a Phosphoserine. O2 is bound at residue H58. H87 contacts heme b. S102 carries the post-translational modification Phosphoserine. T108 is subject to Phosphothreonine. S124 is modified (phosphoserine). A phosphothreonine mark is found at T134 and T137. Phosphoserine is present on S138.

This sequence belongs to the globin family. In terms of assembly, heterotetramer of two alpha chains and two beta chains. In terms of tissue distribution, red blood cells.

Functionally, involved in oxygen transport from the lung to the various peripheral tissues. In terms of biological role, hemopressin acts as an antagonist peptide of the cannabinoid receptor CNR1. Hemopressin-binding efficiently blocks cannabinoid receptor CNR1 and subsequent signaling. The protein is Hemoglobin subunit alpha (HBA) of Chrysocyon brachyurus (Maned wolf).